Reading from the N-terminus, the 432-residue chain is Adenylosuccinate synthetase (432 aa).

GTP contacts are provided by residues 13-19 and 41-43; these read GDEGKGK and GHT. D14 functions as the Proton acceptor in the catalytic mechanism. Residues D14 and G41 each coordinate Mg(2+). IMP contacts are provided by residues 14–17, 39–42, T130, R144, Q225, T240, and R304; these read DEGK and NAGH. The Proton donor role is filled by H42. Position 300-306 (300-306) interacts with substrate; it reads ATTGRRR. GTP is bound by residues R306, 332–334, and 415–417; these read KLD and STG.

Belongs to the adenylosuccinate synthetase family. In terms of assembly, homodimer. It depends on Mg(2+) as a cofactor.

It localises to the cytoplasm. It catalyses the reaction IMP + L-aspartate + GTP = N(6)-(1,2-dicarboxyethyl)-AMP + GDP + phosphate + 2 H(+). It participates in purine metabolism; AMP biosynthesis via de novo pathway; AMP from IMP: step 1/2. In terms of biological role, plays an important role in the de novo pathway of purine nucleotide biosynthesis. Catalyzes the first committed step in the biosynthesis of AMP from IMP. The sequence is that of Adenylosuccinate synthetase from Serratia proteamaculans (strain 568).